The following is a 100-amino-acid chain: Small ribosomal subunit protein uS14c (100 aa).

This sequence belongs to the universal ribosomal protein uS14 family. In terms of assembly, part of the 30S ribosomal subunit.

It localises to the plastid. The protein resides in the chloroplast. Binds 16S rRNA, required for the assembly of 30S particles. In Cryptomeria japonica (Japanese cedar), this protein is Small ribosomal subunit protein uS14c.